The sequence spans 557 residues: Formate--tetrahydrofolate ligase 2 (557 aa).

66-73 (TPAGEGKT) is an ATP binding site.

It belongs to the formate--tetrahydrofolate ligase family.

It catalyses the reaction (6S)-5,6,7,8-tetrahydrofolate + formate + ATP = (6R)-10-formyltetrahydrofolate + ADP + phosphate. The protein operates within one-carbon metabolism; tetrahydrofolate interconversion. This chain is Formate--tetrahydrofolate ligase 2, found in Streptococcus pyogenes serotype M1.